Consider the following 144-residue polypeptide: Transcriptional regulator SlyA (144 aa).

The region spanning 2–135 is the HTH marR-type domain; it reads ESPLGSDLAR…LIKLVAKLEH (134 aa). Positions 49–72 form a DNA-binding region, H-T-H motif; sequence QIQLAKAIGIEQPSLVRTLDQLED.

It belongs to the SlyA family. As to quaternary structure, homodimer.

Functionally, transcription regulator that can specifically activate or repress expression of target genes. Required to activate expression of virulent genes. This Salmonella choleraesuis (strain SC-B67) protein is Transcriptional regulator SlyA.